Reading from the N-terminus, the 349-residue chain is Anaerobic nitrite reductase Glb1-3 (349 aa).

Globin domains are found at residues 13-162 and 184-333; these read GFTE…AEMK and CFTE…AEMK. Heme b contacts are provided by serine 56, lysine 70, histidine 74, lysine 104, threonine 108, histidine 109, serine 227, lysine 241, histidine 245, lysine 275, threonine 279, and histidine 280.

The protein belongs to the plant globin family. In terms of assembly, monomer. Requires heme b as cofactor.

It is found in the cytoplasm. Its subcellular location is the nucleus. It carries out the reaction Fe(III)-heme b-[protein] + nitric oxide + H2O = Fe(II)-heme b-[protein] + nitrite + 2 H(+). Functionally, phytoglobin that regulates the fine tuning of nitric oxide (NO) concentration in the cytosol in response to sudden changes in O(2) availability, and performs both symbiotic and nonsymbiotic functions. Exhibits NO dioxygenase activity in the presence of O(2) but nitrite reductase (NiR) activity in the absence of O(2) (e.g. during flooding or in waterlogged soil). May not function as an oxygen storage or transport protein. Extremely reactive toward the physiological ligands O(2), nitric oxide (NO), and nitrite with a very high affinity for O(2) through an hexacoordinate heme iron because of a very low dissociation constant. This is Anaerobic nitrite reductase Glb1-3 from Medicago truncatula (Barrel medic).